Consider the following 253-residue polypeptide: U1 small nuclear ribonucleoprotein A (253 aa).

The RRM 1 domain occupies 23–102 (VTIYINNLNE…KPMRIQYAKT (80 aa)). Residues 111-140 (DGTFVPRERRKRNDEKPEKKQKREQHHDVS) are disordered. Positions 179 to 253 (NILFVQNLPH…NQMLISYAKK (75 aa)) constitute an RRM 2 domain.

The protein belongs to the RRM U1 A/B'' family. Component of the spliceosome where it is associated with snRNP U1.

It localises to the nucleus. The protein localises to the nucleolus. Its function is as follows. Involved in nuclear pre-mRNA splicing. In Oryza sativa subsp. indica (Rice), this protein is U1 small nuclear ribonucleoprotein A.